A 213-amino-acid polypeptide reads, in one-letter code: Uridine kinase (213 aa).

ATP is bound at residue 15–22 (GASASGKS).

Belongs to the uridine kinase family.

It is found in the cytoplasm. The catalysed reaction is uridine + ATP = UMP + ADP + H(+). It catalyses the reaction cytidine + ATP = CMP + ADP + H(+). The protein operates within pyrimidine metabolism; CTP biosynthesis via salvage pathway; CTP from cytidine: step 1/3. It participates in pyrimidine metabolism; UMP biosynthesis via salvage pathway; UMP from uridine: step 1/1. This chain is Uridine kinase, found in Cronobacter sakazakii (strain ATCC BAA-894) (Enterobacter sakazakii).